A 142-amino-acid polypeptide reads, in one-letter code: MAKKVTAYIKLQVKAGQASPSPPVGPALGQRGLNIMDFCKAFNAGTQKIEQGLPIPVVITAYSDRTFTFITKSPPASILLKKIVGIQSGSKRPNTEKVGKVTRKQLEDIAKTKELDMTAADLDAAVRTIAGSARSMGLVVEG.

It belongs to the universal ribosomal protein uL11 family. In terms of assembly, part of the ribosomal stalk of the 50S ribosomal subunit. Interacts with L10 and the large rRNA to form the base of the stalk. L10 forms an elongated spine to which L12 dimers bind in a sequential fashion forming a multimeric L10(L12)X complex. In terms of processing, one or more lysine residues are methylated.

In terms of biological role, forms part of the ribosomal stalk which helps the ribosome interact with GTP-bound translation factors. This is Large ribosomal subunit protein uL11 from Xylella fastidiosa (strain Temecula1 / ATCC 700964).